The chain runs to 262 residues: Calbindin (262 aa).

Position 2 is an N-acetylthreonine (threonine 2). EF-hand domains follow at residues 12–47 (ISAAQFFEIWHHYDSDGNGYMDGKELQNFIQELQQA), 54–89 (DLTPEMKAFVDQYGKATDGKIGIVELAQVLPTEENF), 99–134 (KSSEDFMQTWRKYDSDHSGFIDSEELKSFLKDLLQK), 143–178 (KLTEYTEIMLRMFDANNDGKLELTELARLLPVQENF), and 187–222 (MCAKEFNKAFEMYDQDGNGYIDENELDALLKDLCEK). Ca(2+) contacts are provided by aspartate 25, aspartate 27, asparagine 29, tyrosine 31, and glutamate 36. Residues aspartate 112, aspartate 114, serine 116, glutamate 123, aspartate 156, asparagine 158, aspartate 160, lysine 162, glutamate 167, aspartate 200, aspartate 202, asparagine 204, tyrosine 206, and glutamate 211 each coordinate Ca(2+).

This sequence belongs to the calbindin family. In terms of tissue distribution, highly abundant in supporting cells. Also present in hair cells.

In terms of biological role, buffers cytosolic calcium. May stimulate a membrane Ca(2+)-ATPase and a 3',5'-cyclic nucleotide phosphodiesterase. This Gallus gallus (Chicken) protein is Calbindin (CALB1).